The sequence spans 330 residues: MGKGILSLQQEMSLEYSEKSYQEVLKIRQESYWKRMKSFSLFEVIMHWTASLNKHTCRSYRGSFLSLEKIGLLSLDMNLQEFSLLNHNLILDAIKKVSSAKTSWTEGTKQVRAASYISLTRFLNRMTQGIVAIAQPSKQENSRTFFKTREIVKTDAMNSLQTASFLKELKKINARDWLIAQTMLQGGKRSSEVLSLEISQICFQQATISFSQLKNRQTEKRIIITYPQKFMHFLQEYIGQRRGFVFVTRSGKMVGLRQIARTFSQAGLQAAIPFKITPHVLRATAVTEYKRLGCSDSDIMKVTGHATAKMIFAYDKSSREDNASKKMALI.

The 86-residue stretch at 39 to 124 (FSLFEVIMHW…SYISLTRFLN (86 aa)) folds into the Core-binding (CB) domain. Residues 152–327 (VKTDAMNSLQ…SREDNASKKM (176 aa)) enclose the Tyr recombinase domain. Catalysis depends on residues Arg189, Lys214, His279, Arg282, and His305. Catalysis depends on Tyr314, which acts as the O-(3'-phospho-DNA)-tyrosine intermediate.

The protein belongs to the 'phage' integrase family.

This is Virulence plasmid integrase pGP8-D from Chlamydia trachomatis serovar L2 (strain ATCC VR-902B / DSM 19102 / 434/Bu).